An 88-amino-acid chain; its full sequence is UPF0297 protein SSU98_0066 (88 aa).

Belongs to the UPF0297 family.

The polypeptide is UPF0297 protein SSU98_0066 (Streptococcus suis (strain 98HAH33)).